The following is a 242-amino-acid chain: Protein HTATIP2 (242 aa).

Position 2 is an N-acetylalanine (Ala2). The tract at residues 2 to 25 (ADKEALPKLREDFKMQNKSVFILG) is required for interaction with elongation factor EEF1A1. The NADPH site is built by Ser27, Gly28, Glu29, Thr30, Arg52, Arg53, Leu92, Gly93, Tyr143, Lys147, Leu170, and Arg178. Tyr143 (proton acceptor) is an active-site residue. Residue Lys147 is part of the active site.

Monomer. Forms homodimers during oxidative stress. Interacts (via N-terminus) with elongation factor EEF1A1 (via middle-region); the interaction is direct and competes with EEF1A1 binding to guanyl-nucleotide exchange factor EEF1B2, thereby inhibiting GDP for GTP exchange and reactivation of EEF1A1. Interacts with nuclear transport receptors XPO4, IPO5/RANBP5, IPO7, IPO9 and KPNB1 as well as GCN1L1/GCN1 and LRPPRC probably through their HEAT repeats. Binds NCOA5/CIA.

It localises to the cytoplasm. Functionally, represses translation by preventing reactivation of elongation factor eEF1A. May also inhibit nuclear import by competing with nuclear import substrates for binding to a subset of nuclear transport receptors. Has additionally been proposed to act as a redox sensor involved in cellular oxidative stress surveillance. The sequence is that of Protein HTATIP2 from Mus musculus (Mouse).